Consider the following 1342-residue polypeptide: DNA-directed RNA polymerase subunit beta (1342 aa).

This sequence belongs to the RNA polymerase beta chain family. In terms of assembly, the RNAP catalytic core consists of 2 alpha, 1 beta, 1 beta' and 1 omega subunit. When a sigma factor is associated with the core the holoenzyme is formed, which can initiate transcription.

The enzyme catalyses RNA(n) + a ribonucleoside 5'-triphosphate = RNA(n+1) + diphosphate. DNA-dependent RNA polymerase catalyzes the transcription of DNA into RNA using the four ribonucleoside triphosphates as substrates. This chain is DNA-directed RNA polymerase subunit beta, found in Blochmanniella floridana.